Consider the following 240-residue polypeptide: Protein OPG176 (240 aa).

It belongs to the orthopoxvirus OPG176 family. As to quaternary structure, tetramer. Interacts with host MYD88, TRF4, TICAM2 and MAL.

Functionally, BCL2-like protein which disrupts the host immune response by inhibiting the TLR4 signaling pathway leading to NF-kappa-B activation. Acts close to the plasma membrane and targets several host TIR-domain containing adapter proteins including MYD88, TIRAP, TRIF and TICAM2. In turn, blocks the host NF-kappa-B and TRIF-mediated IRF3 activation. This Bos taurus (Bovine) protein is Protein OPG176 (OPG176).